Here is a 54-residue protein sequence, read N- to C-terminus: Beta-2-microglobulin (54 aa).

The region spanning 3–41 (KVELSDLSFNKDWSFYLLAHREFVPTATDKYACRVSHIT) is the Ig-like C1-type domain.

Belongs to the beta-2-microglobulin family. Heterodimer of an alpha chain and a beta chain. Beta-2-microglobulin is the beta-chain of major histocompatibility complex class I molecules.

It localises to the secreted. Component of the class I major histocompatibility complex (MHC). Involved in the presentation of peptide antigens to the immune system. This chain is Beta-2-microglobulin (B2M), found in Mesocricetus auratus (Golden hamster).